A 224-amino-acid chain; its full sequence is uncharacterized protein (224 aa).

In terms of domain architecture, 4Fe-4S spans serine 9–glutamate 68. Positions 26, 29, 34, and 51 each coordinate [4Fe-4S] cluster.

It depends on [4Fe-4S] cluster as a cofactor.

This is an uncharacterized protein from Methanocaldococcus jannaschii (strain ATCC 43067 / DSM 2661 / JAL-1 / JCM 10045 / NBRC 100440) (Methanococcus jannaschii).